The sequence spans 546 residues: MAAKDVVFGDSARAKMVEGVNILANAVKVTLGPKGRNVVLERSFGGPTVTKDGVSVAKEIELKDKLQNMGAQMVKEVASKTSDNAGDGTTTATVLAQSIVREGMKYVASGMNPMDLKRGIDKAVAAAVEELKKISKPCTTNKEIAQVGSISANSDSSIGDRIAEAMDKVGKEGVITVEDGKSLADELDVVEGMQFDRGYLSPYFINNPDKQVAVLENPFVLLHDKKVSNIRDLLPVLEQVAKAGRPLLIIAEDVEGEALATLVVNNIRGILKTVAVKAPGFGDRRKAMLEDIAILTGGQVIAEETGLTLEKATLAELGQAKRIEVGKENTTIIDGAGEAVNIEARVKQIRTQIEEATSDYDREKLQERVAKLAGGVAVIKVGAATEVEMKEKKARVEDALHATRAAVEEGIVPGGGVALIRARTAIAALTGVNADQNAGIKIVLRAMEEPLRQIVTNGGEEASVVVAAVAAGKGNYGYNAATGEYVDMVEAGVVDPTKVTRTALQNAASVAGLLLTTDAAVAELPKEDAPMPGGMPGGMGGMGMDM.

Residues 30–33 (TLGP), Lys-51, 87–91 (DGTTT), Gly-415, 479–481 (NAA), and Asp-495 contribute to the ATP site. Positions 526 to 546 (KEDAPMPGGMPGGMGGMGMDM) are disordered. Residues 534–546 (GMPGGMGGMGMDM) show a composition bias toward gly residues.

The protein belongs to the chaperonin (HSP60) family. As to quaternary structure, forms a cylinder of 14 subunits composed of two heptameric rings stacked back-to-back. Interacts with the co-chaperonin GroES.

It localises to the cytoplasm. It catalyses the reaction ATP + H2O + a folded polypeptide = ADP + phosphate + an unfolded polypeptide.. Its function is as follows. Together with its co-chaperonin GroES, plays an essential role in assisting protein folding. The GroEL-GroES system forms a nano-cage that allows encapsulation of the non-native substrate proteins and provides a physical environment optimized to promote and accelerate protein folding. This Burkholderia thailandensis protein is Chaperonin GroEL.